The chain runs to 117 residues: Large ribosomal subunit protein bL20 (117 aa).

Belongs to the bacterial ribosomal protein bL20 family.

Its function is as follows. Binds directly to 23S ribosomal RNA and is necessary for the in vitro assembly process of the 50S ribosomal subunit. It is not involved in the protein synthesizing functions of that subunit. The sequence is that of Large ribosomal subunit protein bL20 from Magnetococcus marinus (strain ATCC BAA-1437 / JCM 17883 / MC-1).